The primary structure comprises 134 residues: Large ribosomal subunit protein bL19 (134 aa).

The tract at residues 110 to 134 (ARLHQEEGPSSAAPASTPPAAAPQA) is disordered. Residues 125-134 (STPPAAAPQA) are compositionally biased toward pro residues.

The protein belongs to the bacterial ribosomal protein bL19 family.

This protein is located at the 30S-50S ribosomal subunit interface and may play a role in the structure and function of the aminoacyl-tRNA binding site. The sequence is that of Large ribosomal subunit protein bL19 from Anaeromyxobacter sp. (strain Fw109-5).